The following is a 478-amino-acid chain: Ribosomal RNA small subunit methyltransferase F (478 aa).

S-adenosyl-L-methionine is bound by residues 121 to 127 (ASAPGSK), Glu-145, Asp-172, and Asp-190. The active-site Nucleophile is Cys-243.

Belongs to the class I-like SAM-binding methyltransferase superfamily. RsmB/NOP family.

Its subcellular location is the cytoplasm. The enzyme catalyses cytidine(1407) in 16S rRNA + S-adenosyl-L-methionine = 5-methylcytidine(1407) in 16S rRNA + S-adenosyl-L-homocysteine + H(+). Its function is as follows. Specifically methylates the cytosine at position 1407 (m5C1407) of 16S rRNA. The polypeptide is Ribosomal RNA small subunit methyltransferase F (Shewanella woodyi (strain ATCC 51908 / MS32)).